Here is a 336-residue protein sequence, read N- to C-terminus: NADH-quinone oxidoreductase subunit H (336 aa).

Helical transmembrane passes span 9–29 (LVWI…LTYA), 77–97 (FLFA…VIPF), 116–136 (LGVM…IIAG), 156–176 (ISYE…TGSL), 188–208 (LPYW…VSIL), 236–256 (IPFA…SSIM), 275–295 (IVPG…CFLI), and 315–335 (VFLP…AFNI).

The protein belongs to the complex I subunit 1 family. In terms of assembly, NDH-1 is composed of 14 different subunits. Subunits NuoA, H, J, K, L, M, N constitute the membrane sector of the complex.

The protein localises to the cell inner membrane. It catalyses the reaction a quinone + NADH + 5 H(+)(in) = a quinol + NAD(+) + 4 H(+)(out). In terms of biological role, NDH-1 shuttles electrons from NADH, via FMN and iron-sulfur (Fe-S) centers, to quinones in the respiratory chain. The immediate electron acceptor for the enzyme in this species is believed to be ubiquinone. Couples the redox reaction to proton translocation (for every two electrons transferred, four hydrogen ions are translocated across the cytoplasmic membrane), and thus conserves the redox energy in a proton gradient. This subunit may bind ubiquinone. This chain is NADH-quinone oxidoreductase subunit H, found in Neorickettsia sennetsu (strain ATCC VR-367 / Miyayama) (Ehrlichia sennetsu).